A 459-amino-acid chain; its full sequence is MIKDPFERLGLDREVLTVSQLNGRARVLLEDVFRSVWVEGEISNLARPASGHMYFTLKDSGAQVRCALFRQNATRVRQALRDGLAVRVRGKVSLFEGRGDYQLILDTVEPAGDGALRLAFEALKEKLGAEGLFSAERKKPLPAHPQRIGIITSPTGAVIRDIISVFGRRAPQVELNLIPTAVQGREAIAQIVRAIRLADSLGFDALILARGGGSLEDLWCFNEEAVARAVAACVTPIVSAVGHETDVSISDFVADVRAPTPSAAAELLAPDNSGLRQRLDGLQRRLLLRMQNRLTHDRLRLESLTRRLRHPGERLRQRAQRLDDLDMRLRRAFMLNLNQRRERLARLDARLAAQHPGRNLKLLNQRLDSLAERLPRAMREVLKDRRQRFQAQLQTLQVVSPLATLARGYSILLDEQGQAIRSAEQTRNGQRLTARLNEGELLVRVEDNHLTPVTLSLLD.

The protein belongs to the XseA family. Heterooligomer composed of large and small subunits.

The protein resides in the cytoplasm. It carries out the reaction Exonucleolytic cleavage in either 5'- to 3'- or 3'- to 5'-direction to yield nucleoside 5'-phosphates.. Functionally, bidirectionally degrades single-stranded DNA into large acid-insoluble oligonucleotides, which are then degraded further into small acid-soluble oligonucleotides. This Pseudomonas putida (strain ATCC 47054 / DSM 6125 / CFBP 8728 / NCIMB 11950 / KT2440) protein is Exodeoxyribonuclease 7 large subunit.